Here is a 255-residue protein sequence, read N- to C-terminus: 1-(5-phosphoribosyl)-5-[(5-phosphoribosylamino)methylideneamino] imidazole-4-carboxamide isomerase (255 aa).

The active-site Proton acceptor is the D8. Catalysis depends on D129, which acts as the Proton donor.

It belongs to the HisA/HisF family.

It localises to the cytoplasm. It carries out the reaction 1-(5-phospho-beta-D-ribosyl)-5-[(5-phospho-beta-D-ribosylamino)methylideneamino]imidazole-4-carboxamide = 5-[(5-phospho-1-deoxy-D-ribulos-1-ylimino)methylamino]-1-(5-phospho-beta-D-ribosyl)imidazole-4-carboxamide. It participates in amino-acid biosynthesis; L-histidine biosynthesis; L-histidine from 5-phospho-alpha-D-ribose 1-diphosphate: step 4/9. This Synechococcus sp. (strain CC9902) protein is 1-(5-phosphoribosyl)-5-[(5-phosphoribosylamino)methylideneamino] imidazole-4-carboxamide isomerase.